A 213-amino-acid chain; its full sequence is Ribonuclease HII (213 aa).

The 212-residue stretch at 2–213 folds into the RNase H type-2 domain; the sequence is GRVAGIDEAG…KEWATWKRLR (212 aa). Residues Asp8, Glu9, and Asp113 each coordinate a divalent metal cation.

Belongs to the RNase HII family. Mn(2+) serves as cofactor. It depends on Mg(2+) as a cofactor.

It localises to the cytoplasm. It carries out the reaction Endonucleolytic cleavage to 5'-phosphomonoester.. Endonuclease that specifically degrades the RNA of RNA-DNA hybrids. The polypeptide is Ribonuclease HII (Thermofilum pendens (strain DSM 2475 / Hrk 5)).